Consider the following 309-residue polypeptide: Homoserine kinase (309 aa).

An ATP-binding site is contributed by 91–101 (PIGSGLGSSAC).

The protein belongs to the GHMP kinase family. Homoserine kinase subfamily.

The protein resides in the cytoplasm. The catalysed reaction is L-homoserine + ATP = O-phospho-L-homoserine + ADP + H(+). Its pathway is amino-acid biosynthesis; L-threonine biosynthesis; L-threonine from L-aspartate: step 4/5. Functionally, catalyzes the ATP-dependent phosphorylation of L-homoserine to L-homoserine phosphate. The chain is Homoserine kinase from Salmonella arizonae (strain ATCC BAA-731 / CDC346-86 / RSK2980).